The chain runs to 364 residues: Chorismate synthase (364 aa).

Arginine 48 contacts NADP(+). FMN is bound by residues 131 to 133 (RSS), 243 to 244 (NA), glycine 288, 303 to 307 (KPTSS), and arginine 329.

This sequence belongs to the chorismate synthase family. As to quaternary structure, homotetramer. It depends on FMNH2 as a cofactor.

It catalyses the reaction 5-O-(1-carboxyvinyl)-3-phosphoshikimate = chorismate + phosphate. The protein operates within metabolic intermediate biosynthesis; chorismate biosynthesis; chorismate from D-erythrose 4-phosphate and phosphoenolpyruvate: step 7/7. Functionally, catalyzes the anti-1,4-elimination of the C-3 phosphate and the C-6 proR hydrogen from 5-enolpyruvylshikimate-3-phosphate (EPSP) to yield chorismate, which is the branch point compound that serves as the starting substrate for the three terminal pathways of aromatic amino acid biosynthesis. This reaction introduces a second double bond into the aromatic ring system. This chain is Chorismate synthase, found in Brucella abortus (strain S19).